The primary structure comprises 224 residues: Response regulator protein GraR (224 aa).

The Response regulatory domain occupies 2–115 (DILLVEDDMT…VLIAKLQAIY (114 aa)). At Asp-51 the chain carries 4-aspartylphosphate. The ompR/PhoB-type DNA-binding region spans 126–224 (KRVLSWQDAI…KIGKGYMAHG (99 aa)).

Phosphorylated by GraS.

The protein resides in the cytoplasm. Its function is as follows. Member of the two-component regulatory system GraR/GraS involved in resistance against cationic antimicrobial peptides (CAMPs). The protein is Response regulator protein GraR (graR) of Staphylococcus saprophyticus subsp. saprophyticus (strain ATCC 15305 / DSM 20229 / NCIMB 8711 / NCTC 7292 / S-41).